A 734-amino-acid polypeptide reads, in one-letter code: Photosystem I P700 chlorophyll a apoprotein A2 (734 aa).

Helical transmembrane passes span 46–69, 135–158, 175–199, 273–291, 330–353, 369–395, 417–439, and 517–535; these read IFAS…FHVA, LYTG…LHLQ, LNHH…HVAI, IAHH…GHMY, IHFQ…QHMY, AALY…IFFI, AIIS…LYVH, and FLVH…LILV. Positions 559 and 568 each coordinate [4Fe-4S] cluster. 2 helical membrane passes run 575–596 and 643–665; these read AFYL…YWHW and LSVW…MFLI. 3 residues coordinate chlorophyll a: His-654, Met-662, and Tyr-670. Trp-671 serves as a coordination point for phylloquinone. A helical membrane pass occupies residues 707 to 727; the sequence is LVGLAHFSVGYIFTYAAFLIA.

This sequence belongs to the PsaA/PsaB family. As to quaternary structure, the PsaA/B heterodimer binds the P700 chlorophyll special pair and subsequent electron acceptors. PSI consists of a core antenna complex that captures photons, and an electron transfer chain that converts photonic excitation into a charge separation. The eukaryotic PSI reaction center is composed of at least 11 subunits. P700 is a chlorophyll a/chlorophyll a' dimer, A0 is one or more chlorophyll a, A1 is one or both phylloquinones and FX is a shared 4Fe-4S iron-sulfur center. serves as cofactor.

It localises to the plastid. It is found in the chloroplast thylakoid membrane. It carries out the reaction reduced [plastocyanin] + hnu + oxidized [2Fe-2S]-[ferredoxin] = oxidized [plastocyanin] + reduced [2Fe-2S]-[ferredoxin]. PsaA and PsaB bind P700, the primary electron donor of photosystem I (PSI), as well as the electron acceptors A0, A1 and FX. PSI is a plastocyanin-ferredoxin oxidoreductase, converting photonic excitation into a charge separation, which transfers an electron from the donor P700 chlorophyll pair to the spectroscopically characterized acceptors A0, A1, FX, FA and FB in turn. Oxidized P700 is reduced on the lumenal side of the thylakoid membrane by plastocyanin. The sequence is that of Photosystem I P700 chlorophyll a apoprotein A2 from Pelargonium hortorum (Common geranium).